The primary structure comprises 692 residues: MEEKPGQPQPQHHHSHHHPHHHPQQQQQQQSHHHHHYYFYNHSHNHHHHHHHQQPHQYLQHGAEGSPKAQPKPLKHEQKHTLQQHQETPKKKTGYGEINGNAGEREISLKSLSSDEATNPISRVLNGNQQVVETSLKQTVKTSTFGKAGIKTKNFIQKNSMDKKNGKSYENKSGETQAVDKTDTIAIPNGVITSSSGYITNGYMSKGADNDGSGSESGYTTPKKRKARRNSAKGCENLNLVQDKIMQETSVPALKQGLETLKPDYSEQKGMRVDGSKPIWKYETGPGGTSRGKPAMGDVLRKSSDIKPGLSSKKFDDRPKGKHASAAASKEDSWTLFKPPPVFPVDNSSAKIVPKISYASKVKENLNKTVQNSSVSPSSSSSSSSTGETQTQSSSRLSQVPMSALKSVTSASFSNGPVLAGTDGSVYPSGGQPLLTTAANTLTPISTGTDSVLQDMSLASAAVEQIKSSLFIYPSNMQTVLLSAQVDLPSQTDQQNLGDIFQNQWGLSFINEPSAGPETVIGKSSDHKVMEVTFQGEYPATLVSQGAEIIPSGTEHPVFPKAYELEKRTSPQVLGHILKPGTTESGALSLDPSHIGDLQKADTSSQGALVFLSKDYEIENQNPLASPTNTLLGSAKEQRYQRGLERNDSWGSFDLRAAIVYHTKEMESIWNLQKQDPKRIITYNEAMDSPDQ.

Residues Met1 to Gly100 form a disordered region. 2 stretches are compositionally biased toward basic residues: residues Gln11–Pro23 and Ser31–Gln54. A Glycyl lysine isopeptide (Lys-Gly) (interchain with G-Cter in SUMO2) cross-link involves residue Lys79. The residue at position 88 (Thr88) is a Phosphothreonine. Lys110 is covalently cross-linked (Glycyl lysine isopeptide (Lys-Gly) (interchain with G-Cter in SUMO2)). Phosphoserine occurs at positions 113 and 114. Residues Lys137, Lys147, Lys158, and Lys172 each participate in a glycyl lysine isopeptide (Lys-Gly) (interchain with G-Cter in SUMO2) cross-link. The disordered stretch occupies residues Ser205–Lys233. 2 positions are modified to phosphoserine: Ser213 and Ser215. Tyr219 bears the Phosphotyrosine mark. A phosphothreonine mark is found at Thr220 and Thr221. Basic residues predominate over residues Pro222 to Ser231. Glycyl lysine isopeptide (Lys-Gly) (interchain with G-Cter in SUMO2) cross-links involve residues Lys262 and Lys281. 2 disordered regions span residues Lys277–Phe337 and Thr369–Pro401. Arg291 is modified (omega-N-methylarginine). A Glycyl lysine isopeptide (Lys-Gly) (interchain with G-Cter in SUMO2) cross-link involves residue Lys293. Phosphoserine is present on Ser304. Lys307 participates in a covalent cross-link: Glycyl lysine isopeptide (Lys-Gly) (interchain with G-Cter in SUMO2). Over residues Gln371–Ser395 the composition is skewed to low complexity. A Phosphoserine modification is found at Ser376. A Phosphothreonine modification is found at Thr569. Residues Ser570, Ser589, Ser605, and Ser626 each carry the phosphoserine modification. Thr630 is modified (phosphothreonine). Phosphoserine occurs at positions 634, 649, 652, and 689.

In terms of assembly, interacts with FMR1 (via N-terminus). Interacts with DDX6.

The protein resides in the nucleus. Its subcellular location is the cytoplasm. It localises to the stress granule. Functionally, binds RNA. This chain is FMR1-interacting protein NUFIP2 (Nufip2), found in Mus musculus (Mouse).